We begin with the raw amino-acid sequence, 439 residues long: Methylenetetrahydrofolate--tRNA-(uracil-5-)-methyltransferase TrmFO (439 aa).

8 to 13 (GAGLAG) is an FAD binding site.

The protein belongs to the MnmG family. TrmFO subfamily. FAD serves as cofactor.

The protein localises to the cytoplasm. It carries out the reaction uridine(54) in tRNA + (6R)-5,10-methylene-5,6,7,8-tetrahydrofolate + NADH + H(+) = 5-methyluridine(54) in tRNA + (6S)-5,6,7,8-tetrahydrofolate + NAD(+). It catalyses the reaction uridine(54) in tRNA + (6R)-5,10-methylene-5,6,7,8-tetrahydrofolate + NADPH + H(+) = 5-methyluridine(54) in tRNA + (6S)-5,6,7,8-tetrahydrofolate + NADP(+). Catalyzes the folate-dependent formation of 5-methyl-uridine at position 54 (M-5-U54) in all tRNAs. The chain is Methylenetetrahydrofolate--tRNA-(uracil-5-)-methyltransferase TrmFO from Magnetococcus marinus (strain ATCC BAA-1437 / JCM 17883 / MC-1).